The primary structure comprises 191 residues: MATPNRPWMGLLLLGVLGVLQTPAPTEAALQPNFEEDKFLGRWFTSGLASNSSWFLEKRKVLSMCKSEVAPAADGGLNVTSTFLRKDQCETRTLLLRPAGPPGCYSYTSPHWSSTHEVSVAETDYETYALLYTESVRGPGPDSLMATLYSRTQTPRAEVKEKFTTFARSLGFTEEGIVFLPKTDKCMEVRT.

The signal sequence occupies residues 1 to 24 (MATPNRPWMGLLLLGVLGVLQTPA). Asn-51 carries an N-linked (GlcNAc...) asparagine glycan. Cys-65 acts as the Nucleophile in catalysis. Asn-78 carries an N-linked (GlcNAc...) asparagine glycan. A disulfide bridge connects residues Cys-89 and Cys-186.

The protein belongs to the calycin superfamily. Lipocalin family. Monomer. In the male reproductive system, it is expressed in the testis and epididymis, and is secreted into the seminal fluid.

The protein localises to the rough endoplasmic reticulum. Its subcellular location is the nucleus membrane. The protein resides in the golgi apparatus. It localises to the cytoplasm. It is found in the perinuclear region. The protein localises to the secreted. The enzyme catalyses prostaglandin H2 = prostaglandin D2. Functionally, catalyzes the conversion of PGH2 to PGD2, a prostaglandin involved in smooth muscle contraction/relaxation and a potent inhibitor of platelet aggregation. Involved in a variety of CNS functions, such as sedation, NREM sleep and PGE2-induced allodynia, and may have an anti-apoptotic role in oligodendrocytes. Binds small non-substrate lipophilic molecules, including biliverdin, bilirubin, retinal, retinoic acid and thyroid hormone, and may act as a scavenger for harmful hydrophobic molecules and as a secretory retinoid and thyroid hormone transporter. Possibly involved in development and maintenance of the blood-brain, blood-retina, blood-aqueous humor and blood-testis barrier. It is likely to play important roles in both maturation and maintenance of the central nervous system and male reproductive system. Involved in PLA2G3-dependent maturation of mast cells. PLA2G3 is secreted by immature mast cells and acts on nearby fibroblasts upstream to PTDGS to synthesize PGD2, which in turn promotes mast cell maturation and degranulation via PTGDR. In Ovis aries (Sheep), this protein is Prostaglandin-H2 D-isomerase (PTGDS).